The following is a 368-amino-acid chain: Cytochrome P450 119 (368 aa).

Heme contacts are provided by His76, Arg80, Thr257, Arg259, His315, and Cys317.

The protein belongs to the cytochrome P450 family. Heme serves as cofactor.

Its subcellular location is the cytoplasm. It carries out the reaction 2 a phenolic donor + H2O2 = 2 a phenolic radical donor + 2 H2O. Its function is as follows. The endogenous substrate is not known. In vitro, catalyzes the H(2)O(2)-dependent epoxidation of styrene, cis-beta-methylstyrene, and cis-stilbene with retention of stereochemistry. Is able to use cumene hydroperoxide (CHP) or tert-butyl hydroperoxide (TBHP) instead of H(2)O(2) as the electron acceptor. Can also hydroxylate fatty acids such as lauric acid. The polypeptide is Cytochrome P450 119 (cyp119) (Sulfolobus acidocaldarius (strain ATCC 33909 / DSM 639 / JCM 8929 / NBRC 15157 / NCIMB 11770)).